The sequence spans 244 residues: Cell division protein ZapD (244 aa).

This sequence belongs to the ZapD family. In terms of assembly, interacts with FtsZ.

The protein resides in the cytoplasm. In terms of biological role, cell division factor that enhances FtsZ-ring assembly. Directly interacts with FtsZ and promotes bundling of FtsZ protofilaments, with a reduction in FtsZ GTPase activity. In Shewanella oneidensis (strain ATCC 700550 / JCM 31522 / CIP 106686 / LMG 19005 / NCIMB 14063 / MR-1), this protein is Cell division protein ZapD.